A 793-amino-acid polypeptide reads, in one-letter code: Caldesmon (793 aa).

At arginine 12 the chain carries Phosphoserine. Glutamate 21 carries the post-translational modification Phosphotyrosine. 3 disordered regions span residues 26–94 (AYQR…DDEA), 108–407 (QKRL…IKGE), and 434–458 (KKQG…KPTF). The tract at residues 26 to 207 (AYQRNDDDEE…PKRGSIGENQ (182 aa)) is myosin and calmodulin-binding. Basic and acidic residues predominate over residues 47–56 (QERLRQKQEE). Residues 60 to 74 (GQVTDQVEVNAQNSV) are compositionally biased toward polar residues. The segment covering 108 to 122 (QKRLQEALERQKEFD) has biased composition (basic and acidic residues). Serine 129 carries the post-translational modification Phosphoserine. 2 stretches are compositionally biased toward basic and acidic residues: residues 146–162 (TTEK…RYEI) and 173–188 (QKND…KEDK). Residues glutamate 196 and serine 202 each carry the phosphoserine modification. Residues isoleucine 203 and glutamate 209 each participate in a glycyl lysine isopeptide (Lys-Gly) (interchain with G-Cter in SUMO2) cross-link. Composition is skewed to basic and acidic residues over residues 236 to 407 (EEPK…IKGE) and 435 to 458 (KQGE…KPTF). 3 consecutive repeat copies span residues 319 to 332 (EEEK…QRIK), 333 to 346 (EEEK…QRIK), and 347 to 360 (EEEK…QRIK). A 3 X 14 AA tandem repeats of E-E-E-K-R-A-A-E-E-R-Q-R-I-K region spans residues 319-375 (EEEKRAAEERQRIKEEEKRAAEERQRIKEEEKRAAEERQRIKEEEKRAAEERQRARA). Lysine 459 is covalently cross-linked (Glycyl lysine isopeptide (Lys-Gly) (interchain with G-Cter in SUMO2)). Positions 492–640 (KSQNGEFMTH…KKPFKCFTPK (149 aa)) are disordered. Basic and acidic residues-rich tracts occupy residues 532 to 558 (AGKR…KQKQ) and 566 to 633 (EELK…DKKP). The tract at residues 564-621 (ELEELKKKREERRKVLEEEEQRRKQEEADRKLREEEEKRRLKEEIERRRAEAAEKRQK) is tropomyosin-binding. Phosphoserine is present on serine 643. Lysine 645 is covalently cross-linked (Glycyl lysine isopeptide (Lys-Gly) (interchain with G-Cter in SUMO2)). The tract at residues 653–686 (LNKSVQKSSGVKSTHQAAIVSKIDSRLEQYTSAI) is strong actin-binding. The residue at position 656 (serine 656) is a Phosphoserine. The interval 664-674 (KSTHQAAIVSK) is tropomyosin-binding. Disordered stretches follow at residues 687–706 (EGTK…PVPA), 721–740 (VFSS…GLKV), and 747–793 (NEWL…PTKV). The tract at residues 716–722 (WEKGNVF) is calmodulin-binding. Over residues 721-733 (VFSSPTAAGTPNK) the composition is skewed to polar residues. The residue at position 724 (serine 724) is a Phosphoserine. Phosphothreonine is present on residues threonine 730 and threonine 753. Serine 759 bears the Phosphoserine mark. Residues 765 to 784 (SDLRPGDVSSKRNLWEKQSV) are compositionally biased toward basic and acidic residues. The segment at 768 to 793 (RPGDVSSKRNLWEKQSVDKVTSPTKV) is weak actin-binding. A Phosphoserine modification is found at serine 789.

The protein belongs to the caldesmon family. In terms of processing, in non-muscle cells, phosphorylation by CDK1 during mitosis causes caldesmon to dissociate from microfilaments. Phosphorylation reduces caldesmon binding to actin, myosin, and calmodulin as well as its inhibition of actomyosin ATPase activity. Phosphorylation also occurs in both quiescent and dividing smooth muscle cells with similar effects on the interaction with actin and calmodulin and on microfilaments reorganization. CDK1-mediated phosphorylation promotes Schwann cell migration during peripheral nerve regeneration. In terms of tissue distribution, high-molecular-weight caldesmon (isoform 1) is predominantly expressed in smooth muscles, whereas low-molecular-weight caldesmon (isoforms 2, 3, 4 and 5) are widely distributed in non-muscle tissues and cells. Not expressed in skeletal muscle or heart.

Its subcellular location is the cytoplasm. The protein localises to the cytoskeleton. It localises to the myofibril. The protein resides in the stress fiber. Its function is as follows. Actin- and myosin-binding protein implicated in the regulation of actomyosin interactions in smooth muscle and nonmuscle cells (could act as a bridge between myosin and actin filaments). Stimulates actin binding of tropomyosin which increases the stabilization of actin filament structure. In muscle tissues, inhibits the actomyosin ATPase by binding to F-actin. This inhibition is attenuated by calcium-calmodulin and is potentiated by tropomyosin. Interacts with actin, myosin, two molecules of tropomyosin and with calmodulin. Also plays an essential role during cellular mitosis and receptor capping. Involved in Schwann cell migration during peripheral nerve regeneration. This Homo sapiens (Human) protein is Caldesmon (CALD1).